A 314-amino-acid chain; its full sequence is 4-hydroxy-3-methylbut-2-enyl diphosphate reductase (314 aa).

Residue cysteine 12 participates in [4Fe-4S] cluster binding. The (2E)-4-hydroxy-3-methylbut-2-enyl diphosphate site is built by histidine 41 and histidine 74. Positions 41 and 74 each coordinate dimethylallyl diphosphate. The isopentenyl diphosphate site is built by histidine 41 and histidine 74. Residue cysteine 96 participates in [4Fe-4S] cluster binding. Histidine 124 contributes to the (2E)-4-hydroxy-3-methylbut-2-enyl diphosphate binding site. Histidine 124 serves as a coordination point for dimethylallyl diphosphate. Residue histidine 124 coordinates isopentenyl diphosphate. Catalysis depends on glutamate 126, which acts as the Proton donor. Threonine 167 contacts (2E)-4-hydroxy-3-methylbut-2-enyl diphosphate. Cysteine 197 serves as a coordination point for [4Fe-4S] cluster. Positions 225, 226, 227, and 269 each coordinate (2E)-4-hydroxy-3-methylbut-2-enyl diphosphate. Dimethylallyl diphosphate-binding residues include serine 225, serine 226, asparagine 227, and serine 269. Isopentenyl diphosphate contacts are provided by serine 225, serine 226, asparagine 227, and serine 269.

This sequence belongs to the IspH family. Requires [4Fe-4S] cluster as cofactor.

The catalysed reaction is isopentenyl diphosphate + 2 oxidized [2Fe-2S]-[ferredoxin] + H2O = (2E)-4-hydroxy-3-methylbut-2-enyl diphosphate + 2 reduced [2Fe-2S]-[ferredoxin] + 2 H(+). It carries out the reaction dimethylallyl diphosphate + 2 oxidized [2Fe-2S]-[ferredoxin] + H2O = (2E)-4-hydroxy-3-methylbut-2-enyl diphosphate + 2 reduced [2Fe-2S]-[ferredoxin] + 2 H(+). The protein operates within isoprenoid biosynthesis; dimethylallyl diphosphate biosynthesis; dimethylallyl diphosphate from (2E)-4-hydroxy-3-methylbutenyl diphosphate: step 1/1. It participates in isoprenoid biosynthesis; isopentenyl diphosphate biosynthesis via DXP pathway; isopentenyl diphosphate from 1-deoxy-D-xylulose 5-phosphate: step 6/6. In terms of biological role, catalyzes the conversion of 1-hydroxy-2-methyl-2-(E)-butenyl 4-diphosphate (HMBPP) into a mixture of isopentenyl diphosphate (IPP) and dimethylallyl diphosphate (DMAPP). Acts in the terminal step of the DOXP/MEP pathway for isoprenoid precursor biosynthesis. The chain is 4-hydroxy-3-methylbut-2-enyl diphosphate reductase from Pseudoalteromonas atlantica (strain T6c / ATCC BAA-1087).